Reading from the N-terminus, the 455-residue chain is Epoxide hydrolase 1 (455 aa).

A helical; Signal-anchor for type III membrane protein membrane pass occupies residues 1–21; the sequence is MWLELVLASLLGFVIYWFVSR. Residues 22–455 are Cytoplasmic-facing; the sequence is DKEETLPLGD…RKFVSLAELQ (434 aa). The Nucleophile role is filled by aspartate 226. A Dimethylated arginine modification is found at arginine 295. The active-site Proton donor is the tyrosine 374. Histidine 431 acts as the Proton acceptor in catalysis. At lysine 439 the chain carries N6-acetyllysine.

The protein belongs to the peptidase S33 family.

The protein resides in the microsome membrane. Its subcellular location is the endoplasmic reticulum membrane. The catalysed reaction is cis-stilbene oxide + H2O = (1R,2R)-hydrobenzoin. It catalyses the reaction 1-(4-methoxyphenyl)-N-methyl-N-[(3-methyloxetan-3-yl)methyl]methanamine + H2O = 2-{[(4-methoxybenzyl)(methyl)amino]methyl}-2-methylpropane-1,3-diol. It carries out the reaction 8,9-epoxy-(5Z,11Z,14Z)-eicosatrienoate + H2O = 8,9-dihydroxy-(5Z,11Z,14Z)-eicosatrienoate. The enzyme catalyses 11,12-epoxy-(5Z,8Z,14Z)-eicosatrienoate + H2O = 11,12-dihydroxy-(5Z,8Z,14Z)-eicosatrienoate. The catalysed reaction is 2-(5Z,8Z,11Z,14Z-eicosatetraenoyl)-glycerol + H2O = glycerol + (5Z,8Z,11Z,14Z)-eicosatetraenoate + H(+). Its activity is regulated as follows. Inhibited by 10-hydroxystearamide and methoxy-arachidonyl fluorophosphate. Functionally, biotransformation enzyme that catalyzes the hydrolysis of arene and aliphatic epoxides to less reactive and more water soluble dihydrodiols by the trans addition of water. May play a role in the metabolism of endogenous lipids such as epoxide-containing fatty acids. Metabolizes the abundant endocannabinoid 2-arachidonoylglycerol (2-AG) to free arachidonic acid (AA) and glycerol. Binds 20(S)-hydroxycholesterol (20(S)-OHC). This chain is Epoxide hydrolase 1, found in Rattus norvegicus (Rat).